The primary structure comprises 606 residues: Mitogen-activated protein kinase kinase kinase 7 (606 aa).

The tract at residues M1 to Y300 is interaction with MAPK8IP1. A Protein kinase domain is found at I36–F291. Residues V42–V50 and K63 contribute to the ATP site. K72 participates in a covalent cross-link: Glycyl lysine isopeptide (Lys-Gly) (interchain with G-Cter in ubiquitin). D156 (proton acceptor) is an active-site residue. K158 participates in a covalent cross-link: Glycyl lysine isopeptide (Lys-Gly) (interchain with G-Cter in ubiquitin). A phosphothreonine; by autocatalysis mark is found at T184 and T187. S192 is subject to Phosphoserine; by autocatalysis. K209 is covalently cross-linked (Glycyl lysine isopeptide (Lys-Gly) (interchain with G-Cter in ubiquitin)). Disordered stretches follow at residues P301–V338 and K354–D391. Residues D306–V338 show a composition bias toward polar residues. Residues S361–S375 are compositionally biased toward low complexity. Phosphoserine occurs at positions 367, 389, and 439. Over residues L443–Q452 the composition is skewed to polar residues. The segment at L443–S492 is disordered. Residues V453–R463 are compositionally biased toward low complexity. The residue at position 455 (S455) is a Phosphoserine.

This sequence belongs to the protein kinase superfamily. STE Ser/Thr protein kinase family. MAP kinase kinase kinase subfamily. Can form homodimer. Binds both upstream activators and downstream substrates in multimolecular complexes. Interacts with TAB1/MAP3K7IP1, TAB2/MAP3K7IP2 and TAB3/MAP3K7IP3. Identified in the TRIKA2 complex composed of MAP3K7/TAK1, TAB1/MAP3K7IP1 and TAB2/MAP3K7IP2. Interacts with PPM1L and PPM1B/PP2CB. Interaction with PP2A and PPP6C leads to its repressed activity. Interacts with TRAF6 and TAB1/MAP3K7IP1; during IL-1 signaling. Interacts with TAOK1 and TAOK2; interaction with TAOK2 interferes with MAP3K7 interaction with IKKA, thus preventing NF-kappa-B activation. Interacts with DYNC2I2 (via WD domains). Interacts with CYLD and RBCK1. Interacts with TGFBR1; induces MAP3K7/TAK1 activation by TRAF6. Interacts with MAPK8IP1 and SMAD6. Interacts with isoform 1 of VRK2. Interacts with DAB2; the interaction is induced by TGF-beta stimulation and may mediate TGF-beta stimulated JNK activation. Interacts with TRIM5. Part of a complex containing ITCH, NDFIP1 and MAP3K7. Interacts with PLEKHM1 (via N- and C-terminus). Found in a complex with SH3RF1, RAC2, MAP2K7/MKK7, MAPK8IP1/JIP1, MAPK8/JNK1 and MAPK9/JNK2. Interacts with SASH1. Interacts with RIPK1. Mg(2+) is required as a cofactor. Association with TAB1/MAP3K7IP1 promotes autophosphorylation at Ser-192 and subsequent activation. Association with TAB2/MAP3K7IP2, itself associated with free unanchored Lys-63 polyubiquitin chain, promotes autophosphorylation and subsequent activation of MAP3K7. Dephosphorylation at Ser-192 by PPM1B/PP2CB and at Thr-187 by PP2A and PPP6C leads to inactivation. Deubiquitinated by USP19; leading to negative regulation of TNF-alpha- and IL-1beta-triggered NF-kappa-B activation. Post-translationally, 'Lys-48'-linked polyubiquitination at Lys-72 is induced by TNFalpha, and leads to proteasomal degradation. Undergoes 'Lys-48'-linked polyubiquitination catalyzed by ITCH. 'Lys-63'-linked polyubiquitination at Lys-158 by TRIM8 does not lead to proteasomal degradation but contributes to autophosphorylation and activation. Deubiquitinated by CYLD, a protease that selectively cleaves 'Lys-63'-linked ubiquitin chains.

It localises to the cytoplasm. It is found in the cell membrane. The enzyme catalyses L-seryl-[protein] + ATP = O-phospho-L-seryl-[protein] + ADP + H(+). The catalysed reaction is L-threonyl-[protein] + ATP = O-phospho-L-threonyl-[protein] + ADP + H(+). Its activity is regulated as follows. Activated by pro-inflammatory cytokines and in response to physical and chemical stresses, including osmotic stress, oxidative stress, arsenic and ultraviolet light irradiation. Activated by 'Lys-63'-linked polyubiquitination and by autophosphorylation. Association with TAB1/MAP3K7IP1 and TAB2/MAP3K7IP2 promotes activation through autophosphorylation, whereas PPM1B/PP2CB, PP2A and PPP6C dephosphorylation leads to inactivation. Ceramides are also able to activate MAP3K7/TAK1. In terms of biological role, serine/threonine kinase which acts as an essential component of the MAP kinase signal transduction pathway. Plays an important role in the cascades of cellular responses evoked by changes in the environment. Mediates signal transduction of TRAF6, various cytokines including interleukin-1 (IL-1), transforming growth factor-beta (TGFB), TGFB-related factors like BMP2 and BMP4, toll-like receptors (TLR), tumor necrosis factor receptor CD40 and B-cell receptor (BCR). Once activated, acts as an upstream activator of the MKK/JNK signal transduction cascade and the p38 MAPK signal transduction cascade through the phosphorylation and activation of several MAP kinase kinases like MAP2K1/MEK1, MAP2K3/MKK3, MAP2K6/MKK6 and MAP2K7/MKK7. These MAP2Ks in turn activate p38 MAPKs and c-jun N-terminal kinases (JNKs); both p38 MAPK and JNK pathways control the transcription factors activator protein-1 (AP-1). Independently of MAP2Ks and p38 MAPKs, acts as a key activator of NF-kappa-B by promoting activation of the I-kappa-B-kinase (IKK) core complex. Mechanistically, recruited to polyubiquitin chains of RIPK2 and IKBKG/NEMO via TAB2/MAP3K7IP2 and TAB3/MAP3K7IP3, and catalyzes phosphorylation and activation of IKBKB/IKKB component of the IKK complex, leading to NF-kappa-B activation. In osmotic stress signaling, plays a major role in the activation of MAPK8/JNK1, but not that of NF-kappa-B. Promotes TRIM5 capsid-specific restriction activity. Phosphorylates RIPK1 at 'Ser-321' which positively regulates RIPK1 interaction with RIPK3 to promote necroptosis but negatively regulates RIPK1 kinase activity and its interaction with FADD to mediate apoptosis. Phosphorylates STING1 in response to cGAMP-activation, promoting association between STEEP1 and STING1 and STING1 translocation to COPII vesicles. This is Mitogen-activated protein kinase kinase kinase 7 (Map3k7) from Rattus norvegicus (Rat).